The following is a 401-amino-acid chain: Phosphoglycerate kinase (401 aa).

Substrate is bound by residues 20–22 (DFN), R35, 58–61 (HLGR), R117, and R154. ATP is bound by residues K204, G298, E329, and 358 to 361 (GGDS).

It belongs to the phosphoglycerate kinase family. As to quaternary structure, monomer.

Its subcellular location is the cytoplasm. The catalysed reaction is (2R)-3-phosphoglycerate + ATP = (2R)-3-phospho-glyceroyl phosphate + ADP. Its pathway is carbohydrate degradation; glycolysis; pyruvate from D-glyceraldehyde 3-phosphate: step 2/5. This is Phosphoglycerate kinase from Bifidobacterium longum (strain DJO10A).